We begin with the raw amino-acid sequence, 727 residues long: MTVSENSVLETEVLVGGSAMPNERPGAMEPQSLTEMPEGFPRRSTVANGVRSRSSRRFFVVGGALLLSSFAIYEMGAVFSIGGITPLEYLVLLLFAINFCWIALAFCSGIAGFLILLRKPKAKDLEVTELHTRTAILMPTYNESPDRVFSAVSVMAEALSQTGHGHAFDWFILSDTTDPEIALLEEQAFLVLRQETHKHSRVYYRRRRKNVARKAGNVADFCRRWGSRYDHLLVLDADSLMESSTITGLAQRMQADPDAGLIQTIPSLINGTTLMARLQQFAARIYGPVIGTGLGWWVQKEGNFWGHNAIIRTEAFMGAAGLPNLKGKPPFGGHILSHDFVEAALIRRAGWSVVIAYDLPGSYEECPPSIVDLAVRDRRWCQGNLQHSRILPTKGLHWVSRLHLLTGIMAYLSSPFWLLLILTGLMLALQAHFIRPEYFTDQFSLFPTWPIMDSDRALRLFYITMGVLFGPKIFGVLLLLKDGQFARSVGGRIKAIFSVLFEVVLSALIAPIMMFIHCGAVMSILMGRDSGWSPQRRDDGSMPWLTLIYRHRWHMLAGVMLGYAAILDSLTLLAWMSPALIGLWFAVPISAWTGSVKIGEVFKRAGILATPEERSPAAICLQAQDARAAYQAHISKPWTLAQLLKDPALMELHLAMVDKQPLRAAGTPIEPVEAIVHVKVHEAQCQESAMALFNRQEMALVLANPLMLRSLQKLPEQFVAEDLVSFC.

The disordered stretch occupies residues 18 to 45; sequence SAMPNERPGAMEPQSLTEMPEGFPRRST. 7 consecutive transmembrane segments (helical) span residues 58 to 78, 90 to 110, 278 to 298, 408 to 428, 460 to 480, 496 to 516, and 572 to 592; these read FFVVGGALLLSSFAIYEMGAV, LVLLLFAINFCWIALAFCSGI, LQQFAARIYGPVIGTGLGWWV, IMAYLSSPFWLLLILTGLMLA, LFYITMGVLFGPKIFGVLLLL, IFSVLFEVVLSALIAPIMMFI, and LLAWMSPALIGLWFAVPISAW.

Belongs to the glycosyltransferase 2 family. OpgH subfamily.

It localises to the cell inner membrane. It functions in the pathway glycan metabolism; osmoregulated periplasmic glucan (OPG) biosynthesis. Its function is as follows. Involved in the biosynthesis of osmoregulated periplasmic glucans (OPGs). The sequence is that of Glucans biosynthesis glucosyltransferase H from Shewanella putrefaciens (strain CN-32 / ATCC BAA-453).